We begin with the raw amino-acid sequence, 292 residues long: Glutamate racemase (292 aa).

Residues 28–29 (DS) and 60–61 (YG) each bind substrate. Cys-91 functions as the Proton donor/acceptor in the catalytic mechanism. 92–93 (NT) lines the substrate pocket. Residue Cys-200 is the Proton donor/acceptor of the active site. 201 to 202 (TH) serves as a coordination point for substrate.

Belongs to the aspartate/glutamate racemases family.

The catalysed reaction is L-glutamate = D-glutamate. The protein operates within cell wall biogenesis; peptidoglycan biosynthesis. Functionally, provides the (R)-glutamate required for cell wall biosynthesis. The protein is Glutamate racemase of Nostoc sp. (strain PCC 7120 / SAG 25.82 / UTEX 2576).